The chain runs to 538 residues: Chaperonin GroEL (538 aa).

ATP is bound by residues 29-32 (TIGP), 86-90 (DGTTT), glycine 413, 476-478 (NAA), and aspartate 492.

This sequence belongs to the chaperonin (HSP60) family. Forms a cylinder of 14 subunits composed of two heptameric rings stacked back-to-back. Interacts with the co-chaperonin GroES.

Its subcellular location is the cytoplasm. The catalysed reaction is ATP + H2O + a folded polypeptide = ADP + phosphate + an unfolded polypeptide.. Together with its co-chaperonin GroES, plays an essential role in assisting protein folding. The GroEL-GroES system forms a nano-cage that allows encapsulation of the non-native substrate proteins and provides a physical environment optimized to promote and accelerate protein folding. The sequence is that of Chaperonin GroEL from Staphylococcus aureus (strain bovine RF122 / ET3-1).